Reading from the N-terminus, the 275-residue chain is Penicillin-insensitive murein endopeptidase (275 aa).

An N-terminal signal peptide occupies residues 1–19 (MKNWIVGMVALVTMVPVMA). 3 disulfides stabilise this stretch: C44/C264, C187/C235, and C216/C223. Residues H110, H113, D120, D147, and H211 each coordinate Zn(2+). Residues 227–262 (DTPPPGDGCGAELESWFQPPPPSAKPGKTLPPPLPP) are disordered. Residues 244–262 (QPPPPSAKPGKTLPPPLPP) show a composition bias toward pro residues.

It belongs to the peptidase M74 family. In terms of assembly, dimer. The cofactor is Zn(2+).

The protein localises to the periplasm. Functionally, murein endopeptidase that cleaves the D-alanyl-meso-2,6-diamino-pimelyl amide bond that connects peptidoglycan strands. Likely plays a role in the removal of murein from the sacculus. The protein is Penicillin-insensitive murein endopeptidase of Yersinia pestis bv. Antiqua (strain Antiqua).